The primary structure comprises 417 residues: 26S proteasome regulatory subunit RPN14 (417 aa).

WD repeat units follow at residues 134–173 (AHVSEITKLKFFPSGEALISSSQDMQLKIWSVKDGSNPRT), 176–215 (GHRATVTDIAIIDRGRNVLSASLDGTIRLWECGTGTTIHT), 242–281 (ISTSKKNNLEFGTYGKYVIAGHVSGVITVHNVFSKEQTIQ), 285–325 (KFTC…CPVG), 330–371 (NEGT…PAIE), and 380–416 (SNDDEVSQFCYVSDDESNGEVLEVGKNNFCALYNLSN).

It belongs to the WD repeat PAAF1/RPN14 family. As to quaternary structure, associates with the 19S proteasome regulatory particle (RP). Interacts directly with RPT5 and RPT6.

The protein localises to the cytoplasm. The protein resides in the nucleus. Its function is as follows. Acts as a regulatory subunit of the 26 proteasome which is involved in the ATP-dependent degradation of ubiquitinated proteins. Is not a genuine component of the 26S proteasome, but an auxiliary factor that interacts with the proteasomal ATPase of 19S regulatory particle (RP). Acts as a chaperone which regulates the highly structured assembly of the 19S regulatory particle. Involved in the substrate specificity of the 26S proteasome and is especially involved in the degradation of ubiquitinated GCN4. May contribute to the stability of the 26S proteasome in some stress conditions. The sequence is that of 26S proteasome regulatory subunit RPN14 (RPN14) from Saccharomyces cerevisiae (strain ATCC 204508 / S288c) (Baker's yeast).